A 662-amino-acid chain; its full sequence is Glutathione hydrolase 7 (662 aa).

Topologically, residues 1-106 (MAAENEASQE…AAECSCRQDG (106 aa)) are cytoplasmic. 4 positions are modified to phosphoserine: S17, S72, S79, and S83. Positions 26 to 90 (SFPRLPEDEP…DGSPLRETRK (65 aa)) are disordered. The segment covering 72–83 (SSSSEMGSQDGS) has biased composition (low complexity). The helical; Signal-anchor for type II membrane protein transmembrane segment at 107 to 127 (LTVIVTACLTFATGVTVALVM) threads the bilayer. At 128–662 (QIYFGDPQIF…SPDAAGATIL (535 aa)) the chain is on the extracellular side. N-linked (GlcNAc...) asparagine glycans are attached at residues N198, N267, N283, N330, N353, N394, N519, N523, and N586.

The protein belongs to the gamma-glutamyltransferase family. As to quaternary structure, heterodimer composed of the light and heavy chains. The active site is located in the light chain. Post-translationally, cleaved by autocatalysis into a large and a small subunit and the autocatalytic cleavage is essential to the functional activation of the enzyme.

The protein resides in the membrane. The enzyme catalyses an N-terminal (5-L-glutamyl)-[peptide] + an alpha-amino acid = 5-L-glutamyl amino acid + an N-terminal L-alpha-aminoacyl-[peptide]. It catalyses the reaction glutathione + H2O = L-cysteinylglycine + L-glutamate. The catalysed reaction is an S-substituted glutathione + H2O = an S-substituted L-cysteinylglycine + L-glutamate. The protein operates within sulfur metabolism; glutathione metabolism. Its function is as follows. Hydrolyzes and transfers gamma-glutamyl moieties from glutathione and other gamma-glutamyl compounds to acceptors. The protein is Glutathione hydrolase 7 of Mus musculus (Mouse).